A 159-amino-acid polypeptide reads, in one-letter code: Crossover junction endodeoxyribonuclease RuvC (159 aa).

Catalysis depends on residues D7, E66, and D139. Residues D7, E66, and D139 each coordinate Mg(2+).

Belongs to the RuvC family. Homodimer which binds Holliday junction (HJ) DNA. The HJ becomes 2-fold symmetrical on binding to RuvC with unstacked arms; it has a different conformation from HJ DNA in complex with RuvA. In the full resolvosome a probable DNA-RuvA(4)-RuvB(12)-RuvC(2) complex forms which resolves the HJ. Mg(2+) serves as cofactor.

It localises to the cytoplasm. It carries out the reaction Endonucleolytic cleavage at a junction such as a reciprocal single-stranded crossover between two homologous DNA duplexes (Holliday junction).. Its function is as follows. The RuvA-RuvB-RuvC complex processes Holliday junction (HJ) DNA during genetic recombination and DNA repair. Endonuclease that resolves HJ intermediates. Cleaves cruciform DNA by making single-stranded nicks across the HJ at symmetrical positions within the homologous arms, yielding a 5'-phosphate and a 3'-hydroxyl group; requires a central core of homology in the junction. The consensus cleavage sequence is 5'-(A/T)TT(C/G)-3'. Cleavage occurs on the 3'-side of the TT dinucleotide at the point of strand exchange. HJ branch migration catalyzed by RuvA-RuvB allows RuvC to scan DNA until it finds its consensus sequence, where it cleaves and resolves the cruciform DNA. The chain is Crossover junction endodeoxyribonuclease RuvC from Sulfurovum sp. (strain NBC37-1).